We begin with the raw amino-acid sequence, 176 residues long: N5-carboxyaminoimidazole ribonucleotide mutase (176 aa).

Ser14, Asp17, and Arg44 together coordinate substrate.

Belongs to the AIR carboxylase family. Class I subfamily.

It carries out the reaction 5-carboxyamino-1-(5-phospho-D-ribosyl)imidazole + H(+) = 5-amino-1-(5-phospho-D-ribosyl)imidazole-4-carboxylate. It participates in purine metabolism; IMP biosynthesis via de novo pathway; 5-amino-1-(5-phospho-D-ribosyl)imidazole-4-carboxylate from 5-amino-1-(5-phospho-D-ribosyl)imidazole (N5-CAIR route): step 2/2. Functionally, catalyzes the conversion of N5-carboxyaminoimidazole ribonucleotide (N5-CAIR) to 4-carboxy-5-aminoimidazole ribonucleotide (CAIR). The chain is N5-carboxyaminoimidazole ribonucleotide mutase from Synechocystis sp. (strain ATCC 27184 / PCC 6803 / Kazusa).